A 72-amino-acid chain; its full sequence is C-hordein (72 aa).

The span at phenylalanine 1–glutamine 36 shows a compositional bias: pro residues. Residues phenylalanine 1–glutamine 61 form a disordered region. Residues glutamine 37 to glutamine 50 are compositionally biased toward low complexity.

In terms of tissue distribution, developing endosperm.

Sulfur-poor seed storage protein. The polypeptide is C-hordein (Hordeum vulgare (Barley)).